We begin with the raw amino-acid sequence, 417 residues long: Serine hydroxymethyltransferase (417 aa).

(6S)-5,6,7,8-tetrahydrofolate contacts are provided by residues Leu-121 and 125–127; that span reads GHL. Lys-230 bears the N6-(pyridoxal phosphate)lysine mark. (6S)-5,6,7,8-tetrahydrofolate is bound at residue 355–357; sequence SPF.

The protein belongs to the SHMT family. Homodimer. The cofactor is pyridoxal 5'-phosphate.

It localises to the cytoplasm. The enzyme catalyses (6R)-5,10-methylene-5,6,7,8-tetrahydrofolate + glycine + H2O = (6S)-5,6,7,8-tetrahydrofolate + L-serine. It functions in the pathway one-carbon metabolism; tetrahydrofolate interconversion. The protein operates within amino-acid biosynthesis; glycine biosynthesis; glycine from L-serine: step 1/1. Catalyzes the reversible interconversion of serine and glycine with tetrahydrofolate (THF) serving as the one-carbon carrier. This reaction serves as the major source of one-carbon groups required for the biosynthesis of purines, thymidylate, methionine, and other important biomolecules. Also exhibits THF-independent aldolase activity toward beta-hydroxyamino acids, producing glycine and aldehydes, via a retro-aldol mechanism. The polypeptide is Serine hydroxymethyltransferase (Legionella pneumophila (strain Corby)).